Here is a 459-residue protein sequence, read N- to C-terminus: Mycothione reductase (459 aa).

Residue 31 to 39 (EQGTFGGTC) coordinates FAD. C39 and C44 are joined by a disulfide. The active-site Proton acceptor is the H444.

This sequence belongs to the class-I pyridine nucleotide-disulfide oxidoreductase family. As to quaternary structure, homodimer. FAD is required as a cofactor.

It catalyses the reaction 2 mycothiol + NADP(+) = mycothione + NADPH + H(+). It carries out the reaction 2 mycothiol + NAD(+) = mycothione + NADH + H(+). Functionally, catalyzes the NAD(P)H-dependent reduction of mycothione (the oxidized disulfide form of mycothiol) to mycothiol. The sequence is that of Mycothione reductase (mtr) from Mycobacterium tuberculosis (strain CDC 1551 / Oshkosh).